The sequence spans 311 residues: Solute carrier family 25 member 48 (311 aa).

Solcar repeat units lie at residues 3-86, 100-205, and 214-301; these read NFQL…TQRF, PHVL…LSDW, and PSPC…SLQA. The next 6 membrane-spanning stretches (helical) occupy residues 9-29, 61-81, 107-127, 193-213, 217-237, and 277-295; these read FVAGWIGGAASVIVGHPLDTV, GMSFPLASIAVYNSVVFGVFS, LLASMVAGVVSVGLGAPVDLI, CLYFIPYVFLSDWITPEACAG, CAVWLAGGMAGAISWGTATPM, and ITVNAVRGFPMSAAMFLGY.

The protein belongs to the mitochondrial carrier (TC 2.A.29) family.

It localises to the mitochondrion inner membrane. This is Solute carrier family 25 member 48 (SLC25A48) from Bos taurus (Bovine).